The following is a 356-amino-acid chain: Phosphate acyltransferase (356 aa).

Belongs to the PlsX family. Homodimer. Probably interacts with PlsY.

The protein localises to the cytoplasm. It catalyses the reaction a fatty acyl-[ACP] + phosphate = an acyl phosphate + holo-[ACP]. It functions in the pathway lipid metabolism; phospholipid metabolism. Its function is as follows. Catalyzes the reversible formation of acyl-phosphate (acyl-PO(4)) from acyl-[acyl-carrier-protein] (acyl-ACP). This enzyme utilizes acyl-ACP as fatty acyl donor, but not acyl-CoA. The sequence is that of Phosphate acyltransferase from Stutzerimonas stutzeri (strain A1501) (Pseudomonas stutzeri).